The chain runs to 500 residues: Protein PIGMENT DEFECTIVE 338, chloroplastic (500 aa).

A chloroplast-targeting transit peptide spans 1 to 63 (MQTLLCQPCK…FAFRGFSICR (63 aa)). S1 motif domains follow at residues 156–265 (KPGD…LSSR), 283–351 (NEPI…LSEK), and 362–431 (GTLL…LSIA).

This sequence belongs to the bacterial ribosomal protein bS1 family. Interacts with CRP1 and PRFB3. Present in leaves (at protein level). Confined to leaf chlorenchyma cells.

The protein resides in the plastid. Its subcellular location is the chloroplast. In terms of biological role, RNA-binding protein that acts as an RNA chaperone to remodel RNA structure and activates their translation. Required for seed pigmentation. Necessary for chloroplast development and subsequent photosynthetic electron flow, as well as for non-photochemical quenching (NPQ). Rubisco regulatory factor which regulates the concerted biogenesis of NDH, PSI (including PsaA, PsaB, PsaD, PsaF, PsaL, PsaG, PsaK and NdhH) and Cytb(6)f (including PetA, PetB, PetC and PetD) complexes. Binds specifically to and involved in the post-transcriptional regulation of plastid-encoded mRNAs (e.g. rbcL, petA, petB, petD and Ycf1), thus modulating expression, cellular localization/compartmentalization, and photosynthetic function. In Arabidopsis thaliana (Mouse-ear cress), this protein is Protein PIGMENT DEFECTIVE 338, chloroplastic.